We begin with the raw amino-acid sequence, 101 residues long: NADH-quinone oxidoreductase subunit K (101 aa).

The next 3 membrane-spanning stretches (helical) occupy residues 5–25 (LGQV…GVLL), 29–49 (LIMI…VLVG), and 62–82 (VALL…ALVV).

This sequence belongs to the complex I subunit 4L family. As to quaternary structure, NDH-1 is composed of 14 different subunits. Subunits NuoA, H, J, K, L, M, N constitute the membrane sector of the complex.

The protein localises to the cell inner membrane. The enzyme catalyses a quinone + NADH + 5 H(+)(in) = a quinol + NAD(+) + 4 H(+)(out). Its function is as follows. NDH-1 shuttles electrons from NADH, via FMN and iron-sulfur (Fe-S) centers, to quinones in the respiratory chain. The immediate electron acceptor for the enzyme in this species is believed to be ubiquinone. Couples the redox reaction to proton translocation (for every two electrons transferred, four hydrogen ions are translocated across the cytoplasmic membrane), and thus conserves the redox energy in a proton gradient. In Syntrophotalea carbinolica (strain DSM 2380 / NBRC 103641 / GraBd1) (Pelobacter carbinolicus), this protein is NADH-quinone oxidoreductase subunit K.